The sequence spans 442 residues: 26S proteasome non-ATPase regulatory subunit 12 homolog B (442 aa).

A coiled-coil region spans residues 1-129 (MEESRQLESS…KEEQGLIAEA (129 aa)). Residues 232 to 403 (EICRSYKAIY…GIICFQIVKD (172 aa)) enclose the PCI domain.

It belongs to the proteasome subunit p55 family. As to quaternary structure, component of the 19S regulatory particle (RP/PA700) lid subcomplex of the 26S proteasome. The 26S proteasome is composed of a core protease (CP), known as the 20S proteasome, capped at one or both ends by the 19S regulatory particle (RP/PA700). The RP/PA700 complex is composed of at least 17 different subunits in two subcomplexes, the base and the lid, which form the portions proximal and distal to the 20S proteolytic core, respectively. In terms of tissue distribution, ubiquitous with highest expression in flowers.

Its subcellular location is the cytoplasm. The protein resides in the nucleus. Acts as a regulatory subunit of the 26 proteasome which is involved in the ATP-dependent degradation of ubiquitinated proteins. Acts redundantly with RPN5A. The polypeptide is 26S proteasome non-ATPase regulatory subunit 12 homolog B (RPN5B) (Arabidopsis thaliana (Mouse-ear cress)).